The primary structure comprises 190 residues: Hypoxanthine/guanine phosphoribosyltransferase (190 aa).

The protein belongs to the purine/pyrimidine phosphoribosyltransferase family. Archaeal HPRT subfamily. As to quaternary structure, homodimer.

Its subcellular location is the cytoplasm. The catalysed reaction is IMP + diphosphate = hypoxanthine + 5-phospho-alpha-D-ribose 1-diphosphate. The enzyme catalyses GMP + diphosphate = guanine + 5-phospho-alpha-D-ribose 1-diphosphate. Its pathway is purine metabolism; IMP biosynthesis via salvage pathway; IMP from hypoxanthine: step 1/1. Its function is as follows. Catalyzes a salvage reaction resulting in the formation of IMP that is energically less costly than de novo synthesis. In Methanosalsum zhilinae (strain DSM 4017 / NBRC 107636 / OCM 62 / WeN5) (Methanohalophilus zhilinae), this protein is Hypoxanthine/guanine phosphoribosyltransferase.